Consider the following 37-residue polypeptide: Esculentin-2JDa (37 aa).

C31 and C37 form a disulfide bridge.

As to expression, expressed by the skin glands.

The protein resides in the secreted. Has antibacterial activity against E.coli and S.aureus strains. This Odorrana jingdongensis (Jingdong frog) protein is Esculentin-2JDa.